The following is a 363-amino-acid chain: Flagellar P-ring protein (363 aa).

An N-terminal signal peptide occupies residues 1–20 (MKLKLFLLSVLLLVSGSSQA).

It belongs to the FlgI family. In terms of assembly, the basal body constitutes a major portion of the flagellar organelle and consists of four rings (L,P,S, and M) mounted on a central rod.

It localises to the periplasm. The protein localises to the bacterial flagellum basal body. Functionally, assembles around the rod to form the L-ring and probably protects the motor/basal body from shearing forces during rotation. The protein is Flagellar P-ring protein of Shewanella woodyi (strain ATCC 51908 / MS32).